The primary structure comprises 1374 residues: Tripeptidyl-peptidase 2 (1374 aa).

In terms of domain architecture, Peptidase S8 spans 62-558 (ALLLNKTDTE…QGMIKIATAY (497 aa)). Catalysis depends on charge relay system residues Asp93, His314, and Ser499.

This sequence belongs to the peptidase S8 family. Expressed in intestinal fat-storing cells and some head neurons.

It carries out the reaction Release of an N-terminal tripeptide from a polypeptide.. Its function is as follows. Component of the proteolytic cascade acting downstream of the 26S proteasome in the ubiquitin-proteasome pathway. Has a role in regulation of fat storage. In Caenorhabditis elegans, this protein is Tripeptidyl-peptidase 2 (tpp-2).